The sequence spans 674 residues: Pre-mRNA-splicing factor cwf4 (674 aa).

HAT repeat units follow at residues 50 to 82, 84 to 116, 118 to 150, 152 to 183, 185 to 216, 218 to 253, 255 to 289, 299 to 331, 333 to 367, 377 to 413, 415 to 446, 448 to 480, 482 to 516, 518 to 549, 567 to 608, and 610 to 643; these read EFQG…WELD, KEFA…CEMK, RNIN…MEEM, GNIT…MERR, HENE…FEEE, GNAA…FEIR, KEYE…FEKQ, TVLD…LEES, GDIN…IWLN, KDVD…FELR, RKID…FEDA, KQFD…LETK, GDSD…FEFE, MEYG…FEIA, TAVV…MHGT, and DTRK…YLFP.

It belongs to the crooked-neck family. Belongs to the 40S cdc5-associated complex (or cwf complex), a spliceosome sub-complex reminiscent of a late-stage spliceosome composed of the U2, U5 and U6 snRNAs and at least brr2, cdc5, cwf2/prp3, cwf3/syf1, cwf4/syf3, cwf5/ecm2, spp42/cwf6, cwf7/spf27, cwf8, cwf9, cwf10, cwf11, cwf12, prp45/cwf13, cwf14, cwf15, cwf16, cwf17, cwf18, cwf19, cwf20, cwf21, cwf22, cwf23, cwf24, cwf25, cwf26, cyp7/cwf27, cwf28, cwf29/ist3, lea1, msl1, prp5/cwf1, prp10, prp12/sap130, prp17, prp22, sap61, sap62, sap114, sap145, slu7, smb1, smd1, smd3, smf1, smg1 and syf2.

The protein localises to the nucleus. Its function is as follows. Involved in pre-mRNA splicing and cell cycle progression. Required for the spliceosome assembly and initiation of the DNA replication. The protein is Pre-mRNA-splicing factor cwf4 (cwf4) of Schizosaccharomyces pombe (strain 972 / ATCC 24843) (Fission yeast).